Reading from the N-terminus, the 234-residue chain is ATP synthase subunit a 1 (234 aa).

The next 5 helical transmembrane spans lie at 20 to 40, 76 to 96, 105 to 125, 162 to 184, and 195 to 215; these read ETVV…ILLT, LLPL…LGVI, DLSV…AYGV, LFGN…GFLA, and EALV…AGAM.

The protein belongs to the ATPase A chain family. In terms of assembly, F-type ATPases have 2 components, CF(1) - the catalytic core - and CF(0) - the membrane proton channel. CF(1) has five subunits: alpha(3), beta(3), gamma(1), delta(1), epsilon(1). CF(0) has three main subunits: a(1), b(2) and c(9-12). The alpha and beta chains form an alternating ring which encloses part of the gamma chain. CF(1) is attached to CF(0) by a central stalk formed by the gamma and epsilon chains, while a peripheral stalk is formed by the delta and b chains.

The protein resides in the cell inner membrane. Functionally, key component of the proton channel; it plays a direct role in the translocation of protons across the membrane. The protein is ATP synthase subunit a 1 of Hahella chejuensis (strain KCTC 2396).